Here is a 153-residue protein sequence, read N- to C-terminus: NAD(P)H-quinone oxidoreductase subunit N (153 aa).

This sequence belongs to the complex I NdhN subunit family. NDH-1 can be composed of about 15 different subunits; different subcomplexes with different compositions have been identified which probably have different functions.

It localises to the cellular thylakoid membrane. It carries out the reaction a plastoquinone + NADH + (n+1) H(+)(in) = a plastoquinol + NAD(+) + n H(+)(out). It catalyses the reaction a plastoquinone + NADPH + (n+1) H(+)(in) = a plastoquinol + NADP(+) + n H(+)(out). In terms of biological role, NDH-1 shuttles electrons from an unknown electron donor, via FMN and iron-sulfur (Fe-S) centers, to quinones in the respiratory and/or the photosynthetic chain. The immediate electron acceptor for the enzyme in this species is believed to be plastoquinone. Couples the redox reaction to proton translocation, and thus conserves the redox energy in a proton gradient. Cyanobacterial NDH-1 also plays a role in inorganic carbon-concentration. This is NAD(P)H-quinone oxidoreductase subunit N from Synechococcus sp. (strain CC9605).